A 958-amino-acid chain; its full sequence is Structure-specific endonuclease subunit SLX4 (958 aa).

6 disordered regions span residues 89–123 (AESPIKSGVEGPTLPLGGDKKKPRTAGARKKKGKT), 183–209 (QKKAETVSRHFTPHTSAPPELVAGPID), 326–400 (LATA…LSPT), 531–589 (DLTI…EQHQ), 594–613 (QSNTPQQPQPAPPPPPSFEL), and 655–849 (STAA…SPPA). The segment covering 109–121 (KKPRTAGARKKKG) has biased composition (basic residues). Positions 332-341 (RRPEEAERST) are enriched in basic and acidic residues. A compositionally biased stretch (polar residues) spans 342–351 (LSRQQDTHIP). The span at 364–373 (AASKSASAKP) shows a compositional bias: low complexity. The segment covering 374-389 (KAAKKAPKPRATKKKQ) has biased composition (basic residues). Residues 600 to 610 (QPQPAPPPPPS) show a composition bias toward pro residues. Composition is skewed to low complexity over residues 655–666 (STAAQAAMSTSA), 775–787 (TTSPATRATRAKA), and 821–838 (PDSGSDDPFASSAPSSPD).

The protein belongs to the SLX4 family. As to quaternary structure, forms a heterodimer with SLX1. Post-translationally, phosphorylated in response to DNA damage.

The protein localises to the nucleus. In terms of biological role, regulatory subunit of the SLX1-SLX4 structure-specific endonuclease that resolves DNA secondary structures generated during DNA repair and recombination. Has endonuclease activity towards branched DNA substrates, introducing single-strand cuts in duplex DNA close to junctions with ss-DNA. This chain is Structure-specific endonuclease subunit SLX4, found in Chaetomium globosum (strain ATCC 6205 / CBS 148.51 / DSM 1962 / NBRC 6347 / NRRL 1970) (Soil fungus).